The chain runs to 347 residues: Quinolinate synthase (347 aa).

The iminosuccinate site is built by histidine 47 and serine 68. Position 113 (cysteine 113) interacts with [4Fe-4S] cluster. Residues tyrosine 139–asparagine 141 and serine 156 each bind iminosuccinate. Cysteine 200 is a binding site for [4Fe-4S] cluster. Residues histidine 226–glutamate 228 and threonine 243 contribute to the iminosuccinate site. [4Fe-4S] cluster is bound at residue cysteine 297.

This sequence belongs to the quinolinate synthase family. Type 1 subfamily. [4Fe-4S] cluster is required as a cofactor.

The protein localises to the cytoplasm. It catalyses the reaction iminosuccinate + dihydroxyacetone phosphate = quinolinate + phosphate + 2 H2O + H(+). It participates in cofactor biosynthesis; NAD(+) biosynthesis; quinolinate from iminoaspartate: step 1/1. Its function is as follows. Catalyzes the condensation of iminoaspartate with dihydroxyacetone phosphate to form quinolinate. The chain is Quinolinate synthase from Salmonella gallinarum (strain 287/91 / NCTC 13346).